A 124-amino-acid polypeptide reads, in one-letter code: Large ribosomal subunit protein bL12 (124 aa).

It belongs to the bacterial ribosomal protein bL12 family. In terms of assembly, homodimer. Part of the ribosomal stalk of the 50S ribosomal subunit. Forms a multimeric L10(L12)X complex, where L10 forms an elongated spine to which 2 to 4 L12 dimers bind in a sequential fashion. Binds GTP-bound translation factors.

Functionally, forms part of the ribosomal stalk which helps the ribosome interact with GTP-bound translation factors. Is thus essential for accurate translation. In Burkholderia cenocepacia (strain ATCC BAA-245 / DSM 16553 / LMG 16656 / NCTC 13227 / J2315 / CF5610) (Burkholderia cepacia (strain J2315)), this protein is Large ribosomal subunit protein bL12.